Reading from the N-terminus, the 267-residue chain is MTTKIKFTKMHGAGNDYIYVDTTRYPIAAPEKKAIEWSKFHTGIGSDGLILIGSSDKADFSMRIFNADGSEAMMCGNGSRCVGKYVYEYGLTAKKEITLDTRSGIKVLKLHVEGGKVTAVTVDMGSPLETEAVDFGDQFPFQSTRVSMGNPHLVTFVEDITQINLPEIGPQLENYHLFPDRTNVEFAQIVGKDTIRMRVWERGSGITQACGTGACATAVAAVLHGLAGRKCDIIMDGGTVTIEWEEATGHILMTGPATKVFDGEMEG.

Substrate is bound by residues Asn15 and Asn66. Cys75 (proton donor) is an active-site residue. Substrate-binding positions include 76 to 77 (GN), Asn150, Asn183, and 201 to 202 (ER). Cys210 (proton acceptor) is an active-site residue. 211–212 (GT) is a substrate binding site.

Belongs to the diaminopimelate epimerase family. In terms of assembly, homodimer.

It localises to the cytoplasm. The catalysed reaction is (2S,6S)-2,6-diaminopimelate = meso-2,6-diaminopimelate. It participates in amino-acid biosynthesis; L-lysine biosynthesis via DAP pathway; DL-2,6-diaminopimelate from LL-2,6-diaminopimelate: step 1/1. Functionally, catalyzes the stereoinversion of LL-2,6-diaminopimelate (L,L-DAP) to meso-diaminopimelate (meso-DAP), a precursor of L-lysine and an essential component of the bacterial peptidoglycan. This Bacteroides thetaiotaomicron (strain ATCC 29148 / DSM 2079 / JCM 5827 / CCUG 10774 / NCTC 10582 / VPI-5482 / E50) protein is Diaminopimelate epimerase.